The primary structure comprises 159 residues: Ankyrin repeat domain-containing protein 37 (159 aa).

3 ANK repeats span residues 1 to 25, 30 to 59, and 63 to 92; these read MLLL…SVNA, QEQS…DLNQ, and LGET…QIGV. The Nuclear localization signal signature appears at 130 to 150; sequence EQQERDPRAPVLRQKRSFRTV.

Post-translationally, ubiquitinated by the CRL2(FEM1B) complex, leading to its degradation. As to expression, expressed testis, ovary, uterus, kidney, liver, but not in other tissues.

The protein localises to the nucleus. The protein resides in the cytoplasm. This Mus musculus (Mouse) protein is Ankyrin repeat domain-containing protein 37.